We begin with the raw amino-acid sequence, 113 residues long: N-alpha-acetyltransferase 38-A, NatC auxiliary subunit (113 aa).

Residues 1–29 (MAAVLEENGCSRQSSPSAGDSDAEPGDTA) form a disordered region. Positions 28 to 106 (TARHKLESLL…IVSIQVELES (79 aa)) constitute a Sm domain.

Belongs to the snRNP Sm proteins family. Component of the N-terminal acetyltransferase C (NatC) complex, which is composed of naa35, naa38 and naa30.

The protein resides in the cytoplasm. Auxillary component of the N-terminal acetyltransferase C (NatC) complex which catalyzes acetylation of N-terminal methionine residues. The chain is N-alpha-acetyltransferase 38-A, NatC auxiliary subunit (naa38-a) from Xenopus laevis (African clawed frog).